A 478-amino-acid polypeptide reads, in one-letter code: Cytochrome c-552 (478 aa).

The first 26 residues, 1–26, serve as a signal peptide directing secretion; the sequence is MARKTLRARRFFSLIFPFFFITSVYA. Position 94 (His94) interacts with heme c. Cys122, Cys125, and Lys126 together coordinate heme. Heme c-binding residues include Cys160, Cys163, His164, Cys209, Cys212, and His213. Ca(2+) contacts are provided by Glu215, Tyr216, Lys261, and Gln263. Tyr216 provides a ligand contact to substrate. His264 is a binding site for substrate. Residues His275, Cys282, Cys285, His286, His301, Cys314, Cys317, His318, and His393 each coordinate heme c.

Belongs to the cytochrome c-552 family. It depends on Ca(2+) as a cofactor. Heme c serves as cofactor.

The protein resides in the periplasm. It catalyses the reaction 6 Fe(III)-[cytochrome c] + NH4(+) + 2 H2O = 6 Fe(II)-[cytochrome c] + nitrite + 8 H(+). The protein operates within nitrogen metabolism; nitrate reduction (assimilation). In terms of biological role, catalyzes the reduction of nitrite to ammonia, consuming six electrons in the process. The sequence is that of Cytochrome c-552 from Salmonella paratyphi A (strain ATCC 9150 / SARB42).